The primary structure comprises 513 residues: Probable DNA ligase (513 aa).

Position 213 (Glu213) interacts with ATP. The active-site N6-AMP-lysine intermediate is the Lys215. Arg220, Arg235, Glu264, Phe304, Arg376, and Lys382 together coordinate ATP.

The protein belongs to the ATP-dependent DNA ligase family. Requires Mg(2+) as cofactor.

It catalyses the reaction ATP + (deoxyribonucleotide)n-3'-hydroxyl + 5'-phospho-(deoxyribonucleotide)m = (deoxyribonucleotide)n+m + AMP + diphosphate.. Functionally, DNA ligase that seals nicks in double-stranded DNA during DNA replication, DNA recombination and DNA repair. In Anaeromyxobacter dehalogenans (strain 2CP-1 / ATCC BAA-258), this protein is Probable DNA ligase.